A 147-amino-acid polypeptide reads, in one-letter code: Cytochrome c-type biogenesis protein CcmE (147 aa).

The Cytoplasmic segment spans residues 1–7; it reads MKPRHKR. A helical; Signal-anchor for type II membrane protein transmembrane segment spans residues 8-28; that stretch reads AAIIAGGLAALGIAAYLVLNA. Topologically, residues 29 to 147 are periplasmic; that stretch reads FQSNLVFFFS…QIQKTIKSLK (119 aa). Residues His-121 and Tyr-125 each contribute to the heme site.

It belongs to the CcmE/CycJ family.

It localises to the cell inner membrane. Functionally, heme chaperone required for the biogenesis of c-type cytochromes. Transiently binds heme delivered by CcmC and transfers the heme to apo-cytochromes in a process facilitated by CcmF and CcmH. The chain is Cytochrome c-type biogenesis protein CcmE from Albidiferax ferrireducens (strain ATCC BAA-621 / DSM 15236 / T118) (Rhodoferax ferrireducens).